Here is an 89-residue protein sequence, read N- to C-terminus: Small ribosomal subunit protein bS20 (89 aa).

Positions 1–26 (MANSPQAKKRARQNEKNRKHNASLRS) are disordered. The span at 7-22 (AKKRARQNEKNRKHNA) shows a compositional bias: basic residues.

Belongs to the bacterial ribosomal protein bS20 family.

Binds directly to 16S ribosomal RNA. This is Small ribosomal subunit protein bS20 from Marinobacter nauticus (strain ATCC 700491 / DSM 11845 / VT8) (Marinobacter aquaeolei).